Here is a 488-residue protein sequence, read N- to C-terminus: Altronate oxidoreductase (488 aa).

V18–A29 lines the NAD(+) pocket.

Belongs to the mannitol dehydrogenase family. UxaB subfamily.

It carries out the reaction D-altronate + NAD(+) = keto-D-tagaturonate + NADH + H(+). The protein operates within carbohydrate metabolism; pentose and glucuronate interconversion. In Pectobacterium atrosepticum (strain SCRI 1043 / ATCC BAA-672) (Erwinia carotovora subsp. atroseptica), this protein is Altronate oxidoreductase.